A 251-amino-acid polypeptide reads, in one-letter code: MSETPQKTTHFGYKTVAENDKASMVADVFHSVAAKYDVMNDLMSFGVHRLWKRQTIASSGVRKGHHVLDLAGGTGDLTAKFSQLVGETGQVILGDINSSMLKVGREKLHNLGLVGNIDYVQMNAEALPFPDNSFDLITIAFGLRNVTDKDKALRSMYRILKPGGRLLVLEFSKPEHEILSKAYDFYSFNLLPTMGKLVANDSESYKYLAESIRMHPDQDTLKSMMSDAGFEQTTYQNLTGGIVALHRGFKY.

S-adenosyl-L-methionine-binding positions include Thr74, Asp95, and Asn123–Ala124.

This sequence belongs to the class I-like SAM-binding methyltransferase superfamily. MenG/UbiE family.

The enzyme catalyses a 2-demethylmenaquinol + S-adenosyl-L-methionine = a menaquinol + S-adenosyl-L-homocysteine + H(+). The catalysed reaction is a 2-methoxy-6-(all-trans-polyprenyl)benzene-1,4-diol + S-adenosyl-L-methionine = a 5-methoxy-2-methyl-3-(all-trans-polyprenyl)benzene-1,4-diol + S-adenosyl-L-homocysteine + H(+). It participates in quinol/quinone metabolism; menaquinone biosynthesis; menaquinol from 1,4-dihydroxy-2-naphthoate: step 2/2. The protein operates within cofactor biosynthesis; ubiquinone biosynthesis. Methyltransferase required for the conversion of demethylmenaquinol (DMKH2) to menaquinol (MKH2) and the conversion of 2-polyprenyl-6-methoxy-1,4-benzoquinol (DDMQH2) to 2-polyprenyl-3-methyl-6-methoxy-1,4-benzoquinol (DMQH2). In Pseudoalteromonas translucida (strain TAC 125), this protein is Ubiquinone/menaquinone biosynthesis C-methyltransferase UbiE.